The chain runs to 1827 residues: Laminin subunit beta-4 (1827 aa).

The first 21 residues, 1-21 (MLLRLELSALLLLLIAAPVRL), serve as a signal peptide directing secretion. Residues 26–266 (VGNSCYPNLG…ALYEMVVRGS (241 aa)) form the Laminin N-terminal domain. Asn231 carries an N-linked (GlcNAc...) asparagine glycan. 19 cysteine pairs are disulfide-bonded: Cys267–Cys276, Cys269–Cys297, Cys299–Cys308, Cys311–Cys331, Cys334–Cys343, Cys336–Cys361, Cys364–Cys373, Cys376–Cys394, Cys397–Cys410, Cys399–Cys417, Cys419–Cys428, Cys431–Cys446, Cys449–Cys463, Cys451–Cys470, Cys472–Cys481, Cys484–Cys498, Cys501–Cys513, Cys503–Cys520, and Cys522–Cys531. Laminin EGF-like domains lie at 267-333 (CFCN…VCKR), 334-396 (CNCH…ACIP), 397-448 (CDCD…GCQL), and 449-500 (CRCN…GCIP). The Laminin EGF-like 5; truncated domain maps to 501–544 (CDCDIGGALKTECSSVDGQCKCRPNMVGQKCNDPAPGYFLAPLD). Positions 540–847 (LAPLDFYIYE…LIGSMSAFIH (308 aa)) constitute a Laminin IV type B domain. 32 disulfides stabilise this stretch: Cys853–Cys865, Cys855–Cys872, Cys874–Cys883, Cys886–Cys898, Cys901–Cys913, Cys903–Cys920, Cys922–Cys931, Cys934–Cys944, Cys947–Cys956, Cys949–Cys963, Cys966–Cys975, Cys978–Cys992, Cys995–Cys1011, Cys997–Cys1022, Cys1024–Cys1033, Cys1036–Cys1051, Cys1054–Cys1068, Cys1056–Cys1075, Cys1078–Cys1087, Cys1090–Cys1103, Cys1106–Cys1126, Cys1108–Cys1133, Cys1135–Cys1144, Cys1147–Cys1160, Cys1163–Cys1175, Cys1165–Cys1182, Cys1184–Cys1193, Cys1196–Cys1208, Cys1211–Cys1223, Cys1213–Cys1230, Cys1232–Cys1241, and Cys1244–Cys1255. Laminin EGF-like domains lie at 853 to 900 (CNCH…GCSP), 901 to 946 (CDCD…LCRR), 947 to 994 (CQCN…PCEP), 995 to 1053 (CLCP…RCKE), 1054 to 1105 (CCCN…DCKE), 1106 to 1162 (CSCD…GCQP), 1163 to 1210 (CNCN…QCMF), and 1211 to 1257 (CDCN…ACEP). N-linked (GlcNAc...) asparagine glycosylation is present at Asn1001. The tract at residues 1258-1449 (CHACNHLWEK…LSAANINEEV (192 aa)) is domain II. Coiled-coil stretches lie at residues 1294–1335 (ELQH…EIID) and 1385–1449 (NKIK…NEEV). Residue Asn1329 is glycosylated (N-linked (GlcNAc...) asparagine). The domain alpha stretch occupies residues 1450 to 1476 (CGAPGDAECEKAKCGGALCGKCGGPDC). The segment at 1477-1827 (TGSLPISLNA…KVQRYNLCSP (351 aa)) is domain I. Asn1485, Asn1496, Asn1513, Asn1533, Asn1599, Asn1629, Asn1644, Asn1672, Asn1686, Asn1702, Asn1726, Asn1745, Asn1750, and Asn1761 each carry an N-linked (GlcNAc...) asparagine glycan. Coiled coils occupy residues 1485 to 1554 (NASK…EKVK) and 1584 to 1820 (DEIK…DKVQ).

Laminin is a complex glycoprotein, consisting of three different polypeptide chains (alpha, beta, gamma), which are bound to each other by disulfide bonds into a cross-shaped molecule comprising one long and three short arms with globules at each end.

It localises to the secreted. Its subcellular location is the extracellular space. The protein resides in the extracellular matrix. It is found in the basement membrane. Functionally, binding to cells via a high affinity receptor, laminin is thought to mediate the attachment, migration and organization of cells into tissues during embryonic development by interacting with other extracellular matrix components. Positively regulates apical-basal distribution of Muller glia cells in the retina. This Danio rerio (Zebrafish) protein is Laminin subunit beta-4 (lamb4).